Consider the following 363-residue polypeptide: Dihydroorotate dehydrogenase (quinone) (363 aa).

Residues 67 to 71 and Thr91 contribute to the FMN site; that span reads AGFDK. Substrate is bound at residue Lys71. 116-120 is a substrate binding site; the sequence is NRMGF. 2 residues coordinate FMN: Asn156 and Asn189. Asn189 is a substrate binding site. The active-site Nucleophile is the Ser192. Asn194 serves as a coordination point for substrate. Lys231 and Thr259 together coordinate FMN. 260-261 provides a ligand contact to substrate; sequence NT. Residues Gly287, Gly316, and 337 to 338 each bind FMN; that span reads YT.

It belongs to the dihydroorotate dehydrogenase family. Type 2 subfamily. Monomer. The cofactor is FMN.

The protein resides in the cell membrane. The enzyme catalyses (S)-dihydroorotate + a quinone = orotate + a quinol. Its pathway is pyrimidine metabolism; UMP biosynthesis via de novo pathway; orotate from (S)-dihydroorotate (quinone route): step 1/1. Catalyzes the conversion of dihydroorotate to orotate with quinone as electron acceptor. This is Dihydroorotate dehydrogenase (quinone) from Kocuria rhizophila (strain ATCC 9341 / DSM 348 / NBRC 103217 / DC2201).